An 89-amino-acid polypeptide reads, in one-letter code: MDKQLADTFTQLSQQNGVVGYCCVDESGLCLKAHGNKQSSNAGFYKSLLDKSKFLTQSGEPANIVIETDTANIFIQQNDKITLSVSKLP.

Belongs to the LAMTOR5 family. In terms of assembly, part of the Ragulator complex.

It localises to the cytoplasm. The protein localises to the lysosome. Its function is as follows. Regulator of the TOR pathway, a signaling cascade that promotes cell growth in response to growth factors, energy levels, and amino acids. As part of the Ragulator complex, may activate the TOR signaling cascade in response to amino acids. This is Ragulator complex protein LAMTOR5 homolog from Dictyostelium discoideum (Social amoeba).